The sequence spans 614 residues: MSTSGSGGGNTPDLSKENVASSPNANPKKNADTESSGGSKNNRQRRRSNTKGDGSNSRNGSRTNSVSNSKNQSNRKDWTDRKSFSQGGINVKSKSPGDDHKRTRSSNSQSAKRNARDSTRTMSQASNGEGLDYSDEYELDEPFSDSDDEDSRPKKPEKMSLTVARGRIRTLSGTVPVVGYSPRWGGPTMCVSCLEFFDLPEQISGFADHLLKEHKIVVSEMNLIVDPKRYIEHWRQRFAKESIDKIFPRIEPSEGDSYFGETDYYYLMSENVAEDRSLRQRLAMRRLEEALQCQQREREDTSFQLQCIFCRYNARGNRSKIIHHLYMIHHLNLGSPDNLVFVTEYIEHLKEKLHRNECIYCEKIFPDRNTLMDHMRKRNHREVNPKNHYYDKFYIINYLELGKRWLDVLAEDFEDTMPTFQDSDEEEEDNEWCEWQEDNLDADETRVVCLLCDASEDNAQSLLEHMKTTHEFDLLKNVSDDKLNSYQRLRLINYIRKQNYHADCWVCQKTEFENPLALQKHILEHKPLSHLPDASIWDTEENLVPIFGNDHFLWMLESILEENEITCSSDDEGESEERFSKLVLESKSNTVEGVIAEDLPELSELNEDDLNALM.

Residues 1 to 10 show a composition bias toward gly residues; that stretch reads MSTSGSGGGN. Residues 1 to 160 are disordered; that stretch reads MSTSGSGGGN…SRPKKPEKMS (160 aa). Residues 18 to 41 show a composition bias toward polar residues; sequence NVASSPNANPKKNADTESSGGSKN. Over residues 54-69 the composition is skewed to low complexity; that stretch reads GSNSRNGSRTNSVSNS. Residues 74 to 83 are compositionally biased toward basic and acidic residues; the sequence is NRKDWTDRKS. Residues 132 to 150 are compositionally biased toward acidic residues; the sequence is DYSDEYELDEPFSDSDDED. 2 C2H2-type zinc fingers span residues 356–380 and 447–470; these read NECIYCEKIFPDRNTLMDHMRKRNH and VVCLLCDASEDNAQSLLEHMKTTH.

It belongs to the ZNF277 family. As to quaternary structure, interacts with rps-2.

It localises to the cytoplasm. In terms of biological role, probable transcription factor. Limits the ability to tolerate cold environment or cold-warm stress. In complex with rps-2, mediates the cold-warm shock response by promoting translocation of components of the RNA exosome from the nucleolus to nucleoplasm. The sequence is that of Zinc finger protein ztf-7 from Caenorhabditis elegans.